The following is a 367-amino-acid chain: GDP-perosamine synthase (367 aa).

The residue at position 181 (Lys181) is an N6-(pyridoxal phosphate)lysine.

The protein belongs to the DegT/DnrJ/EryC1 family. Homotetramer. Pyridoxal 5'-phosphate is required as a cofactor.

It carries out the reaction GDP-alpha-D-perosamine + 2-oxoglutarate = GDP-4-dehydro-alpha-D-rhamnose + L-glutamate. It functions in the pathway bacterial outer membrane biogenesis; LPS O-antigen biosynthesis. Its function is as follows. Catalyzes the synthesis of GDP-perosamine from GDP-4-keto-6-deoxy-D-mannose and L-glutamate. Also shows weak activity with L-glutamine. The polypeptide is GDP-perosamine synthase (Vibrio cholerae).